The sequence spans 409 residues: Arginine deiminase (409 aa).

The Amidino-cysteine intermediate role is filled by Cys-399.

The protein belongs to the arginine deiminase family.

Its subcellular location is the cytoplasm. The enzyme catalyses L-arginine + H2O = L-citrulline + NH4(+). The protein operates within amino-acid degradation; L-arginine degradation via ADI pathway; carbamoyl phosphate from L-arginine: step 1/2. This is Arginine deiminase from Borrelia garinii subsp. bavariensis (strain ATCC BAA-2496 / DSM 23469 / PBi) (Borreliella bavariensis).